A 184-amino-acid polypeptide reads, in one-letter code: Shikimate kinase (184 aa).

Position 15–20 (15–20 (GAGKTS)) interacts with ATP. Threonine 19 is a Mg(2+) binding site. 3 residues coordinate substrate: aspartate 37, arginine 61, and glycine 83. Arginine 123 serves as a coordination point for ATP. Arginine 142 is a binding site for substrate.

This sequence belongs to the shikimate kinase family. Monomer. Mg(2+) serves as cofactor.

Its subcellular location is the cytoplasm. The catalysed reaction is shikimate + ATP = 3-phosphoshikimate + ADP + H(+). The protein operates within metabolic intermediate biosynthesis; chorismate biosynthesis; chorismate from D-erythrose 4-phosphate and phosphoenolpyruvate: step 5/7. Functionally, catalyzes the specific phosphorylation of the 3-hydroxyl group of shikimic acid using ATP as a cosubstrate. The protein is Shikimate kinase of Coxiella burnetii (strain CbuK_Q154) (Coxiella burnetii (strain Q154)).